The following is a 450-amino-acid chain: 23S rRNA (uracil(1939)-C(5))-methyltransferase RlmD (450 aa).

[4Fe-4S] cluster is bound by residues cysteine 81, cysteine 87, cysteine 90, and cysteine 173. Residues glutamine 276, phenylalanine 305, asparagine 310, glutamate 326, aspartate 353, and aspartate 372 each contribute to the S-adenosyl-L-methionine site. The active-site Nucleophile is the cysteine 402.

It belongs to the class I-like SAM-binding methyltransferase superfamily. RNA M5U methyltransferase family. RlmD subfamily.

It catalyses the reaction uridine(1939) in 23S rRNA + S-adenosyl-L-methionine = 5-methyluridine(1939) in 23S rRNA + S-adenosyl-L-homocysteine + H(+). Its function is as follows. Catalyzes the formation of 5-methyl-uridine at position 1939 (m5U1939) in 23S rRNA. The polypeptide is 23S rRNA (uracil(1939)-C(5))-methyltransferase RlmD (Idiomarina loihiensis (strain ATCC BAA-735 / DSM 15497 / L2-TR)).